A 68-amino-acid chain; its full sequence is Movement protein TGBp3 (68 aa).

Residues 1 to 6 (MFSGKE) lie on the Lumenal side of the membrane. Residues 7–26 (ITLFALSTLIALIVLNYMSA) form a helical membrane-spanning segment. At 27–68 (TPNPVCLIELTGHSAVLRGNNCESLTSGVIEALSAHLHGLRN) the chain is on the cytoplasmic side.

The protein belongs to the Tymovirales TGBp3 protein family.

Its subcellular location is the host endoplasmic reticulum membrane. In terms of biological role, plays a role in viral cell-to-cell propagation, by facilitating genome transport to neighboring plant cells through plasmosdesmata. May induce the formation of granular vesicles derived from the Endoplasmic reticulum, which align on actin filaments. This chain is Movement protein TGBp3, found in Papaya mosaic potexvirus (PMV).